The following is a 227-amino-acid chain: Cytochrome c oxidase subunit 2 (227 aa).

The Mitochondrial intermembrane segment spans residues 1–14 (MAYPFQLGLQDATS). A helical transmembrane segment spans residues 15-45 (PIMEELTNFHDHTLMIVFLISSLVLYIISLM). At 46 to 59 (LTTKLTHTSTMDAQ) the chain is on the mitochondrial matrix side. Residues 60-87 (EVETIWTILPAVILILIALPSLRILYMM) form a helical membrane-spanning segment. Residues 88–227 (DEINNPVLTV…YFENWSASMI (140 aa)) are Mitochondrial intermembrane-facing. Residues His-161, Cys-196, Glu-198, Cys-200, His-204, and Met-207 each coordinate Cu cation. Residue Glu-198 coordinates Mg(2+). Tyr-218 carries the post-translational modification Phosphotyrosine.

This sequence belongs to the cytochrome c oxidase subunit 2 family. Component of the cytochrome c oxidase (complex IV, CIV), a multisubunit enzyme composed of 14 subunits. The complex is composed of a catalytic core of 3 subunits MT-CO1, MT-CO2 and MT-CO3, encoded in the mitochondrial DNA, and 11 supernumerary subunits COX4I, COX5A, COX5B, COX6A, COX6B, COX6C, COX7A, COX7B, COX7C, COX8 and NDUFA4, which are encoded in the nuclear genome. The complex exists as a monomer or a dimer and forms supercomplexes (SCs) in the inner mitochondrial membrane with NADH-ubiquinone oxidoreductase (complex I, CI) and ubiquinol-cytochrome c oxidoreductase (cytochrome b-c1 complex, complex III, CIII), resulting in different assemblies (supercomplex SCI(1)III(2)IV(1) and megacomplex MCI(2)III(2)IV(2)). Found in a complex with TMEM177, COA6, COX18, COX20, SCO1 and SCO2. Interacts with TMEM177 in a COX20-dependent manner. Interacts with COX20. Interacts with COX16. Cu cation is required as a cofactor.

The protein localises to the mitochondrion inner membrane. The catalysed reaction is 4 Fe(II)-[cytochrome c] + O2 + 8 H(+)(in) = 4 Fe(III)-[cytochrome c] + 2 H2O + 4 H(+)(out). Component of the cytochrome c oxidase, the last enzyme in the mitochondrial electron transport chain which drives oxidative phosphorylation. The respiratory chain contains 3 multisubunit complexes succinate dehydrogenase (complex II, CII), ubiquinol-cytochrome c oxidoreductase (cytochrome b-c1 complex, complex III, CIII) and cytochrome c oxidase (complex IV, CIV), that cooperate to transfer electrons derived from NADH and succinate to molecular oxygen, creating an electrochemical gradient over the inner membrane that drives transmembrane transport and the ATP synthase. Cytochrome c oxidase is the component of the respiratory chain that catalyzes the reduction of oxygen to water. Electrons originating from reduced cytochrome c in the intermembrane space (IMS) are transferred via the dinuclear copper A center (CU(A)) of subunit 2 and heme A of subunit 1 to the active site in subunit 1, a binuclear center (BNC) formed by heme A3 and copper B (CU(B)). The BNC reduces molecular oxygen to 2 water molecules using 4 electrons from cytochrome c in the IMS and 4 protons from the mitochondrial matrix. The chain is Cytochrome c oxidase subunit 2 from Rattus norvegicus (Rat).